We begin with the raw amino-acid sequence, 336 residues long: MNHQIHIHDSDIAFPCAPGQSVLDAALQAGIELPYSCRKGSCGNCASTLLDGNIASFNGMAVRNELCASEQVLLCGCTAASDIRIHPSSFRRLDPEARKRFTAKVYSNTLAAPDVSLLRLRLPVGKRAKFEAGQYLLIHLDDGESRSYSMANPPHESDGITLHVRHVPGGRFSTIVQQLKSGDTLDIELPFGSIALKPDDARPLICVAGGTGFAPIKSVLDDLAKRKVQRDITLIWGARNPSGLYLPSAIDKWRKVWPQFRYIAAITDLGDMPADAHAGRVDDALRTHFGNLHDHVVHCCGSPALVQSVRTAASDMGLLAQDFHADVFATGPTGHH.

The 2Fe-2S ferredoxin-type domain occupies 3–91 (HQIHIHDSDI…DIRIHPSSFR (89 aa)). The [2Fe-2S] cluster site is built by Cys37, Cys42, Cys45, and Cys75. In terms of domain architecture, FAD-binding FR-type spans 98–197 (RKRFTAKVYS…ELPFGSIALK (100 aa)).

As to quaternary structure, monomer. Part of a multicomponent enzyme system composed of a reductase (TphA1I or TphA1II) and a two-subunit oxygenase component (TphA2I or TphA2II and TphA3I or TphA3II). FAD serves as cofactor. It depends on [2Fe-2S] cluster as a cofactor.

It catalyses the reaction terephthalate + NADH + O2 + H(+) = (3S,4R)-3,4-dihydroxycyclohexa-1,5-diene-1,4-dicarboxylate + NAD(+). Component of the terephthalate 1,2-dioxygenase multicomponent enzyme system which catalyzes the dioxygenation of terephthalate (TER/TPA) to 1,2-dihydroxy-3,5-cyclohexadiene-1,4-dicarboxylic acid (DCD). TphA1 probably reduces TphA2A3. It can also use 2,5-dicarboxypyridine (PDC) and 1,4-napthalenedicarboxylic acid (NDC) as substrates, and preferentially uses NADPH which is the physiological electron donor. The protein is Terephthalate 1,2-dioxygenase, reductase component 2 (tphA1II) of Comamonas sp.